The primary structure comprises 397 residues: Na(+)/H(+) antiporter NhaA 2 (397 aa).

The next 11 helical transmembrane spans lie at 9-29 (LHNP…AMAV), 59-79 (LLLW…GLEL), 95-115 (ILPV…YTLI), 125-145 (GWAI…ALLG), 154-174 (LFLL…IAFF), 177-197 (SELS…LILM), 222-242 (SGVH…LKGE), 260-280 (VVGL…SLQG), 292-312 (LGIA…FVWL), 332-352 (GVAL…SLAF), and 371-391 (LGIL…LRFS).

Belongs to the NhaA Na(+)/H(+) (TC 2.A.33) antiporter family.

The protein localises to the cell inner membrane. The enzyme catalyses Na(+)(in) + 2 H(+)(out) = Na(+)(out) + 2 H(+)(in). Its function is as follows. Na(+)/H(+) antiporter that extrudes sodium in exchange for external protons. The protein is Na(+)/H(+) antiporter NhaA 2 of Magnetococcus marinus (strain ATCC BAA-1437 / JCM 17883 / MC-1).